A 497-amino-acid polypeptide reads, in one-letter code: Maintenance of mitochondrial morphology protein 1 (497 aa).

Residues 1 to 28 (MSSVLNPSSPHSWDLCCSSSSNRSYHRP) lie on the Lumenal side of the membrane. Residues 29–55 (THPIVGLLVGQLSVVLLIGAFIKFFIF) form a helical membrane-spanning segment. Topologically, residues 56-497 (GEAPPSPSRS…GSLPDAVPIT (442 aa)) are cytoplasmic. Disordered stretches follow at residues 60–107 (PSPS…SSST), 284–330 (ESST…STTG), 402–421 (TGVR…AAGV), and 437–497 (EMLH…VPIT). Residues 66-77 (QTHRTSQHKRSY) are compositionally biased toward basic residues. A compositionally biased stretch (basic and acidic residues) spans 81-94 (GARDLSPRTLKEKP). 3 stretches are compositionally biased toward polar residues: residues 95–107 (SSNV…SSST), 284–302 (ESST…NLRS), and 311–330 (PQES…STTG). An SMP-LTD domain is found at 140–393 (QPESLDWFNV…EPRVQVVALP (254 aa)). Over residues 412–421 (DVSSSDAAGV) the composition is skewed to low complexity. Over residues 440 to 451 (HAAREVDAEGLR) the composition is skewed to basic and acidic residues. A compositionally biased stretch (polar residues) spans 462-473 (GSSSKYAQQNQS). Residues 474–484 (SRERGRADDPF) are compositionally biased toward basic and acidic residues.

The protein belongs to the MMM1 family. In terms of assembly, homodimer. Component of the ER-mitochondria encounter structure (ERMES) or MDM complex, composed of MMM1, MDM10, MDM12 and MDM34. An MMM1 homodimer associates with one molecule of MDM12 on each side in a pairwise head-to-tail manner, and the SMP-LTD domains of MMM1 and MDM12 generate a continuous hydrophobic tunnel for phospholipid trafficking.

Its subcellular location is the endoplasmic reticulum membrane. Functionally, component of the ERMES/MDM complex, which serves as a molecular tether to connect the endoplasmic reticulum (ER) and mitochondria. Components of this complex are involved in the control of mitochondrial shape and protein biogenesis, and function in nonvesicular lipid trafficking between the ER and mitochondria. The MDM12-MMM1 subcomplex functions in the major beta-barrel assembly pathway that is responsible for biogenesis of all outer membrane beta-barrel proteins, and acts in a late step after the SAM complex. The MDM10-MDM12-MMM1 subcomplex further acts in the TOM40-specific pathway after the action of the MDM12-MMM1 complex. Essential for establishing and maintaining the structure of mitochondria and maintenance of mtDNA nucleoids. This Uncinocarpus reesii (strain UAMH 1704) protein is Maintenance of mitochondrial morphology protein 1.